Here is a 484-residue protein sequence, read N- to C-terminus: UDP-N-acetylmuramate--L-alanine ligase (484 aa).

Position 125–131 (125–131) interacts with ATP; it reads GTHGKTT.

This sequence belongs to the MurCDEF family.

It localises to the cytoplasm. It catalyses the reaction UDP-N-acetyl-alpha-D-muramate + L-alanine + ATP = UDP-N-acetyl-alpha-D-muramoyl-L-alanine + ADP + phosphate + H(+). Its pathway is cell wall biogenesis; peptidoglycan biosynthesis. In terms of biological role, cell wall formation. The chain is UDP-N-acetylmuramate--L-alanine ligase from Buchnera aphidicola subsp. Acyrthosiphon pisum (strain Tuc7).